The sequence spans 3421 residues: Hemocyanin 2 (3421 aa).

The N-terminal stretch at 1-19 (MWTILALLTATLLFEGAFS) is a signal peptide. The tract at residues 20-442 (VDTVVRKNVD…KPPVPVAQAN (423 aa)) is functional unit a (wall). Cu cation is bound at residue His62. A disulfide bridge connects residues Cys68 and Cys78. The segment at residues 79 to 81 (CLH) is a cross-link (2'-(S-cysteinyl)-histidine (Cys-His)). Cu cation is bound by residues His81, His90, His200, His204, and His231. Disulfide bonds link Cys190–Cys257 and Cys344–Cys356. Asn408 carries N-linked (GlcNAc...) asparagine glycosylation. The functional unit b (wall) stretch occupies residues 443–853 (LAVRKNINDL…RADAKDFGHS (411 aa)). His483 is a Cu cation binding site. Cys489 and Cys500 are disulfide-bonded. A cross-link (2'-(S-cysteinyl)-histidine (Cys-His)) is located at residues 501 to 503 (CVH). 6 residues coordinate Cu cation: His503, His512, His622, His626, His653, and His894. Cysteines 612 and 678 form a disulfide. The stretch at 632–673 (SEKYSMSSLHYTAFDPIFYLHHSNVDRLWAIWQALQIRRGKS) is one WD 1 repeat. Positions 854 to 1275 (RKIRKAVDSL…DEYREAVTSA (422 aa)) are functional unit c (wall). The cysteines at positions 900 and 911 are disulfide-linked. Positions 912–914 (CVH) form a cross-link, 2'-(S-cysteinyl)-histidine (Cys-His). His914, His923, His1033, His1037, and His1063 together coordinate Cu cation. Intrachain disulfides connect Cys1023-Cys1090 and Cys1180-Cys1187. Residues 1043–1084 (NEPYSMSSLRYTTYDPIFFLHRSNTDRLWAIWQALQKYRGKP) form a WD 2 repeat. A glycan (N-linked (GlcNAc...) asparagine) is linked at Asn1183. The functional unit d (wall) stretch occupies residues 1276–1685 (SHIRKNIRDL…NIYYDGLSQH (410 aa)). His1313 is a Cu cation binding site. Cys1319 and Cys1328 form a disulfide bridge. A cross-link (2'-(S-cysteinyl)-histidine (Cys-His)) is located at residues 1329–1331 (CVH). Cu cation-binding residues include His1331 and His1340. One copy of the WD 3 repeat lies at 1387–1425 (QTFDPNPFFRGHIAFENAVTSRDPQPELWDNKDFYENVM). Cystine bridges form between Cys1434/Cys1501 and Cys1590/Cys1599. Residues His1444, His1448, and His1475 each coordinate Cu cation. The stretch at 1454–1495 (RAKYSLSSLDYTAFDPVFFLHHANVDRIWAIWQDLQRYRKKP) is one WD 4 repeat. N-linked (GlcNAc...) asparagine glycosylation occurs at Asn1653. Positions 1686–2102 (NLVRKEVSSL…HGINVRHVGR (417 aa)) are functional unit e (wall). His1726 contacts Cu cation. Cys1732 and Cys1743 are joined by a disulfide. The 2'-(S-cysteinyl)-histidine (Cys-His) cross-link spans 1744 to 1746 (CLH). Residues His1746, His1755, His1868, His1872, and His1899 each coordinate Cu cation. Intrachain disulfides connect Cys1858–Cys1925 and Cys2014–Cys2020. Residues 1878-1919 (SKTHSIGHLHYASYDPLFYIHHSQTDRIWAIWQALQEHRGLS) form a WD 5 repeat. Residues 2103–2522 (NRIRMELSEL…DDHGSDHIAG (420 aa)) are functional unit f (wall). His2143 provides a ligand contact to Cu cation. Cys2149 and Cys2159 are oxidised to a cystine. Residues 2160 to 2162 (CIH) constitute a cross-link (2'-(S-cysteinyl)-histidine (Cys-His)). Cu cation-binding residues include His2162, His2171, His2281, His2285, and His2312. The WD 6 repeat unit spans residues 2168 to 2204 (PHWHRLYTLQMDMALLSHGSAVAIPYWDWTKPISKLP). 2 disulfides stabilise this stretch: Cys2271–Cys2338 and Cys2425–Cys2431. Residues 2523–2929 (SGVRKDVTSL…SGHDHSERHD (407 aa)) form a functional unit g (internal arc) region. A Cu cation-binding site is contributed by His2563. Cys2569 and Cys2579 are joined by a disulfide. The segment at residues 2580–2582 (CTH) is a cross-link (2'-(S-cysteinyl)-histidine (Cys-His)). 5 residues coordinate Cu cation: His2582, His2591, His2691, His2695, and His2722. 2 disulfides stabilise this stretch: Cys2681–Cys2748 and Cys2835–Cys2841. The WD 7 repeat unit spans residues 2700 to 2742 (GHTPYGMSSLEYTAYDPLFYLHHSNTDRIWAIWQALQKYRGFQ). A disordered region spans residues 2898 to 2927 (PSDRIKSPTIEHHGGDHHGGDTSGHDHSER). The interval 2930-3421 (GFFRKEVGSL…VRIHIHIEDE (492 aa)) is functional unit h (internal slab). Residue His2970 coordinates Cu cation. Cysteines 2976 and 2986 form a disulfide. A cross-link (2'-(S-cysteinyl)-histidine (Cys-His)) is located at residues 2987–2989 (CVH). Positions 2989, 2998, 3099, 3103, and 3130 each coordinate Cu cation. 2 cysteine pairs are disulfide-bonded: Cys3089–Cys3156 and Cys3374–Cys3407. A WD 8 repeat occupies 3109–3150 (TETYSMSSLAFSAYDPVFMILHSGLDRLWIIWQELQKLRKKP).

This sequence belongs to the tyrosinase family. Hemocyanin subfamily. Homo-didecamer and homo-multidecamer. In terms of processing, probably N-glycosylated. Asn-2489 is buried deeply in the protein which make it inaccessible for sugar attachment. As to expression, hemolymph.

The protein resides in the secreted. The protein localises to the extracellular space. In terms of biological role, hemocyanins are copper-containing oxygen carriers occurring freely dissolved in the hemolymph of many mollusks and arthropods. The chain is Hemocyanin 2 from Megathura crenulata (Giant keyhole limpet).